The primary structure comprises 1080 residues: Histone deacetylase 4 (1080 aa).

Disordered stretches follow at residues 1-25, 132-165, and 205-312; these read MSSQ…PPRV, KLEQ…ESAV, and TQHS…ISAE. Basic and acidic residues predominate over residues 132–162; the sequence is KLEQHRQEQELEKQHREQKLQQLKNKEKGKE. The span at 205 to 224 shows a compositional bias: polar residues; it reads TQHSSLDQSSPPQSGVSGTY. Basic and acidic residues-rich tracts occupy residues 233–244 and 258–273; these read DSKDDFPLRKTA and KVAE…RKDG. Low complexity predominate over residues 289 to 312; that stretch reads SACNSAPGSGPSSPNNSSNNISAE. The short motif at 348–353 is the PxLPxI/L element; sequence PSLPNI. Disordered regions lie at residues 506–527, 558–579, and 622–646; these read KPNE…ELRE, EPIE…GQRQ, and PLSR…PTKP. The segment covering 509 to 527 has biased composition (basic and acidic residues); the sequence is EPARQHESHPEETEEELRE. Over residues 560–571 the composition is skewed to acidic residues; that stretch reads IESDEEEAEPQQ. Residues 625–637 are compositionally biased toward polar residues; it reads RAQSSPASATFPM. Positions 651 to 1080 are histone deacetylase; sequence GLVYDTLMLK…DEPMEEEPPL (430 aa). 4 residues coordinate Zn(2+): cysteine 663, cysteine 665, histidine 671, and cysteine 747. Histidine 799 is an active-site residue. Positions 1055 to 1080 are disordered; sequence MASLSVGVKPAEKRPDDEPMEEEPPL.

It belongs to the histone deacetylase family. HD type 2 subfamily.

It localises to the nucleus. It catalyses the reaction N(6)-acetyl-L-lysyl-[histone] + H2O = L-lysyl-[histone] + acetate. Responsible for the deacetylation of lysine residues on the N-terminal part of the core histones (H2A, H2B, H3 and H4). Histone deacetylation gives a tag for epigenetic repression and plays an important role in transcriptional regulation, cell cycle progression and developmental events. Histone deacetylases act via the formation of large multiprotein complexes. The protein is Histone deacetylase 4 (HDAC4) of Gallus gallus (Chicken).